A 153-amino-acid chain; its full sequence is D-aminoacyl-tRNA deacylase (153 aa).

A Gly-cisPro motif, important for rejection of L-amino acids motif is present at residues 137–138 (GP).

The protein belongs to the DTD family. As to quaternary structure, homodimer.

It is found in the cytoplasm. It catalyses the reaction glycyl-tRNA(Ala) + H2O = tRNA(Ala) + glycine + H(+). It carries out the reaction a D-aminoacyl-tRNA + H2O = a tRNA + a D-alpha-amino acid + H(+). Its function is as follows. An aminoacyl-tRNA editing enzyme that deacylates mischarged D-aminoacyl-tRNAs. Also deacylates mischarged glycyl-tRNA(Ala), protecting cells against glycine mischarging by AlaRS. Acts via tRNA-based rather than protein-based catalysis; rejects L-amino acids rather than detecting D-amino acids in the active site. By recycling D-aminoacyl-tRNA to D-amino acids and free tRNA molecules, this enzyme counteracts the toxicity associated with the formation of D-aminoacyl-tRNA entities in vivo and helps enforce protein L-homochirality. The protein is D-aminoacyl-tRNA deacylase of Methylococcus capsulatus (strain ATCC 33009 / NCIMB 11132 / Bath).